A 207-amino-acid polypeptide reads, in one-letter code: Ribosomal RNA large subunit methyltransferase E (207 aa).

Residues methionine 1–lysine 20 are disordered. 5 residues coordinate S-adenosyl-L-methionine: glycine 56, tryptophan 58, aspartate 76, aspartate 94, and aspartate 116. The active-site Proton acceptor is the lysine 156.

It belongs to the class I-like SAM-binding methyltransferase superfamily. RNA methyltransferase RlmE family.

The protein localises to the cytoplasm. It carries out the reaction uridine(2552) in 23S rRNA + S-adenosyl-L-methionine = 2'-O-methyluridine(2552) in 23S rRNA + S-adenosyl-L-homocysteine + H(+). In terms of biological role, specifically methylates the uridine in position 2552 of 23S rRNA at the 2'-O position of the ribose in the fully assembled 50S ribosomal subunit. This Desulfosudis oleivorans (strain DSM 6200 / JCM 39069 / Hxd3) (Desulfococcus oleovorans) protein is Ribosomal RNA large subunit methyltransferase E.